A 119-amino-acid polypeptide reads, in one-letter code: Protein yippee-like 3 (119 aa).

Residues 19–116 (RRYSCVHCRA…IELSHMIKDN (98 aa)) enclose the Yippee domain. 4 residues coordinate Zn(2+): Cys23, Cys26, Cys79, and Cys82.

It belongs to the yippee family.

The protein resides in the nucleus. It localises to the nucleolus. Its function is as follows. May be involved in proliferation and apoptosis in myeloid precursor cells. In Danio rerio (Zebrafish), this protein is Protein yippee-like 3 (ypel3).